Consider the following 137-residue polypeptide: Small ribosomal subunit protein uS9c (137 aa).

Belongs to the universal ribosomal protein uS9 family.

It is found in the plastid. The protein localises to the chloroplast. The chain is Small ribosomal subunit protein uS9c (rps9) from Mesostigma viride (Green alga).